Here is a 1129-residue protein sequence, read N- to C-terminus: Phytochrome A (1129 aa).

In terms of domain architecture, GAF spans 217–399; that stretch reads SMERLCDTMV…VFAIHVSKEL (183 aa). C322 serves as a coordination point for phytochromobilin. 2 PAS domains span residues 622-692 and 755-826; these read VTSE…LQGK and DYKA…VNLG. Residues 906–1123 form the Histidine kinase domain; the sequence is YLRRQAKNPL…TFIITVELAA (218 aa).

Belongs to the phytochrome family. Homodimer. Contains one covalently linked phytochromobilin chromophore.

Its function is as follows. Regulatory photoreceptor which exists in two forms that are reversibly interconvertible by light: the Pr form that absorbs maximally in the red region of the spectrum and the Pfr form that absorbs maximally in the far-red region. Photoconversion of Pr to Pfr induces an array of morphogenic responses, whereas reconversion of Pfr to Pr cancels the induction of those responses. Pfr controls the expression of a number of nuclear genes including those encoding the small subunit of ribulose-bisphosphate carboxylase, chlorophyll A/B binding protein, protochlorophyllide reductase, rRNA, etc. It also controls the expression of its own gene(s) in a negative feedback fashion. This chain is Phytochrome A (PHYA), found in Petroselinum crispum (Parsley).